Here is an 835-residue protein sequence, read N- to C-terminus: Protein P (835 aa).

Residues 1 to 176 are terminal protein domain (TP); the sequence is MPLSYQHFRK…FFGTPYTWEH (176 aa). Positions 177 to 334 are spacer; it reads KLQHGTQPVN…HCLHHIVKLL (158 aa). Disordered stretches follow at residues 211-235 and 258-288; these read LGQKSKQGPLATSPRHGSGGLWSRT and RHPSSSINQSRQRKETNTSYSSSERHSPTSH. The polymerase/reverse transcriptase domain (RT) stretch occupies residues 335-680; that stretch reads DDWGPCQHHG…YMHLYPVARQ (346 aa). Residues 345–590 enclose the Reverse transcriptase domain; the sequence is HHFIRIPRTP…KALNFMGYVI (246 aa). Positions 417, 541, and 542 each coordinate Mg(2+).

It belongs to the hepadnaviridae P protein family.

It carries out the reaction DNA(n) + a 2'-deoxyribonucleoside 5'-triphosphate = DNA(n+1) + diphosphate. The enzyme catalyses Endonucleolytic cleavage to 5'-phosphomonoester.. With respect to regulation, activated by host HSP70 and HSP40 in vitro to be able to bind the epsilon loop of the pgRNA. Because deletion of the RNase H region renders the protein partly chaperone-independent, the chaperones may be needed indirectly to relieve occlusion of the RNA-binding site by this domain. Inhibited by several reverse-transcriptase inhibitors: Lamivudine, Adefovir and Entecavir. Multifunctional enzyme that converts the viral RNA genome into dsDNA in viral cytoplasmic capsids. This enzyme displays a DNA polymerase activity that can copy either DNA or RNA templates, and a ribonuclease H (RNase H) activity that cleaves the RNA strand of RNA-DNA heteroduplexes in a partially processive 3'- to 5'-endonucleasic mode. Neo-synthesized pregenomic RNA (pgRNA) are encapsidated together with the P protein, and reverse-transcribed inside the nucleocapsid. Initiation of reverse-transcription occurs first by binding the epsilon loop on the pgRNA genome, and is initiated by protein priming, thereby the 5'-end of (-)DNA is covalently linked to P protein. Partial (+)DNA is synthesized from the (-)DNA template and generates the relaxed circular DNA (RC-DNA) genome. After budding and infection, the RC-DNA migrates in the nucleus, and is converted into a plasmid-like covalently closed circular DNA (cccDNA). The activity of P protein does not seem to be necessary for cccDNA generation, and is presumably released from (+)DNA by host nuclear DNA repair machinery. This chain is Protein P, found in Woolly monkey hepatitis B virus (isolate Louisville) (WMHBV).